The following is an 825-amino-acid chain: Fibrous sheath CABYR-binding protein (825 aa).

2 disordered regions span residues 1-43 (MVGK…SYSA) and 113-139 (QDVEIPPNIPSVQLKMDRSQQTSRTGY). Positions 21-40 (KSSSPKATHRIGNTSGSKGS) are enriched in polar residues. Ser160 is modified (phosphoserine). Disordered regions lie at residues 168–232 (SRPD…LLED), 244–718 (QEGS…DKHS), and 732–751 (GEASAEVSPPPSEQTPEDEA). Residues 200-220 (PATNSNEEIGQKNISRTSFTQ) are compositionally biased toward polar residues. Over residues 277-290 (ATAKAEPRPAEETH) the composition is skewed to basic and acidic residues. 2 stretches are compositionally biased toward low complexity: residues 348-357 (AEILPPSAEE) and 398-407 (PLPAEGALEE). A compositionally biased stretch (pro residues) spans 610 to 676 (VQPPPAEEAP…PAEVQPPPAE (67 aa)).

As to quaternary structure, interacts with CABYR. Interacts with ROPN1 and ROPN1L; the interaction increases upon spermatozoa capacitation conditions. Phosphorylated by PKA upon spermatozoa capacitation conditions.

The protein localises to the cell projection. The protein resides in the cilium. Its subcellular location is the flagellum. Its function is as follows. May be involved in the later stages of fibrous sheath biogenesis and spermatozoa capacitation. Inhibits ROPN1 and ROPN1L SUMOylation. Binds calcium. The polypeptide is Fibrous sheath CABYR-binding protein (FSCB) (Homo sapiens (Human)).